The primary structure comprises 280 residues: Bifunctional protein FolD (280 aa).

NADP(+)-binding positions include 158 to 160 (GES), Ile-183, and Ile-222.

This sequence belongs to the tetrahydrofolate dehydrogenase/cyclohydrolase family. As to quaternary structure, homodimer.

The catalysed reaction is (6R)-5,10-methylene-5,6,7,8-tetrahydrofolate + NADP(+) = (6R)-5,10-methenyltetrahydrofolate + NADPH. It carries out the reaction (6R)-5,10-methenyltetrahydrofolate + H2O = (6R)-10-formyltetrahydrofolate + H(+). It functions in the pathway one-carbon metabolism; tetrahydrofolate interconversion. Catalyzes the oxidation of 5,10-methylenetetrahydrofolate to 5,10-methenyltetrahydrofolate and then the hydrolysis of 5,10-methenyltetrahydrofolate to 10-formyltetrahydrofolate. This chain is Bifunctional protein FolD, found in Mycoplasma mobile (strain ATCC 43663 / 163K / NCTC 11711) (Mesomycoplasma mobile).